A 434-amino-acid polypeptide reads, in one-letter code: Enolase (434 aa).

Residue glutamine 163 participates in (2R)-2-phosphoglycerate binding. Catalysis depends on glutamate 205, which acts as the Proton donor. 3 residues coordinate Mg(2+): aspartate 242, glutamate 291, and aspartate 318. The (2R)-2-phosphoglycerate site is built by lysine 343, arginine 372, serine 373, and lysine 394. The active-site Proton acceptor is lysine 343.

It belongs to the enolase family. Mg(2+) serves as cofactor.

The protein localises to the cytoplasm. It is found in the secreted. Its subcellular location is the cell surface. It carries out the reaction (2R)-2-phosphoglycerate = phosphoenolpyruvate + H2O. It functions in the pathway carbohydrate degradation; glycolysis; pyruvate from D-glyceraldehyde 3-phosphate: step 4/5. Its function is as follows. Catalyzes the reversible conversion of 2-phosphoglycerate (2-PG) into phosphoenolpyruvate (PEP). It is essential for the degradation of carbohydrates via glycolysis. The sequence is that of Enolase from Streptococcus gordonii (strain Challis / ATCC 35105 / BCRC 15272 / CH1 / DL1 / V288).